The chain runs to 377 residues: Nucleosome assembly protein 1;2 (377 aa).

Residues 26–80 (VNVLKNKLHDLTGKHSNVTESLSPNVRKRVEALREIQTEHDELEAKFFEERAALE) are a coiled coil. A Nuclear export signal motif is present at residues 47 to 62 (LSPNVRKRVEALREIQ). The Nuclear localization signal motif lies at 223-228 (KKKPKK). The interval 298–377 (EAAEDDYAEL…GERPPECKQQ (80 aa)) is disordered. Positions 299–342 (AAEDDYAELEDDEDEDDDEEDDEDEDEEEEDEEDDEDEEEDEDE) are enriched in acidic residues. Cys374 carries the post-translational modification Cysteine methyl ester. A lipid anchor (S-farnesyl cysteine) is attached at Cys374. Residues 375–377 (KQQ) constitute a propeptide, removed in mature form.

It belongs to the nucleosome assembly protein (NAP) family. Binds preferentially histone H1 in vitro. Interacts with CYCB1;1.

The protein localises to the nucleus. Its subcellular location is the cytoplasm. Functionally, may modulate chromatin structure by regulation of nucleosome assembly/disassembly. Could function together with B-type cyclins in the regulation of microtubule dynamics. In Nicotiana tabacum (Common tobacco), this protein is Nucleosome assembly protein 1;2 (NAP1;2).